The sequence spans 581 residues: Arginine--tRNA ligase (581 aa).

The 'HIGH' region signature appears at 126–136; sequence PNLAKEMHVGH.

It belongs to the class-I aminoacyl-tRNA synthetase family. Monomer.

Its subcellular location is the cytoplasm. It catalyses the reaction tRNA(Arg) + L-arginine + ATP = L-arginyl-tRNA(Arg) + AMP + diphosphate. The polypeptide is Arginine--tRNA ligase (Shewanella pealeana (strain ATCC 700345 / ANG-SQ1)).